Here is a 428-residue protein sequence, read N- to C-terminus: C4-dicarboxylate transport protein (428 aa).

A run of 9 helical transmembrane segments spans residues 4–24, 44–64, 76–96, 142–162, 184–204, 222–242, 289–309, 326–346, and 352–372; these read SLFK…ILLG, LIKM…IAGM, VALL…LIIV, IGAF…MFGF, VIFG…FGAM, LIVC…GSIA, VVGL…SIYL, IFHQ…AAGV, and IVLA…LALI.

It belongs to the dicarboxylate/amino acid:cation symporter (DAACS) (TC 2.A.23) family.

It localises to the cell inner membrane. Functionally, responsible for the transport of dicarboxylates such as succinate, fumarate, and malate from the periplasm across the membrane. The polypeptide is C4-dicarboxylate transport protein (Citrobacter koseri (strain ATCC BAA-895 / CDC 4225-83 / SGSC4696)).